Here is a 131-residue protein sequence, read N- to C-terminus: Small ribosomal subunit protein eS24 (131 aa).

Residue Met-1 is modified to N-acetylmethionine. At Thr-9 the chain carries Phosphothreonine. A Glycyl lysine isopeptide (Lys-Gly) (interchain with G-Cter in SUMO2) cross-link involves residue Lys-37. Basic and acidic residues predominate over residues 90–100; the sequence is RLARHGLYEKK. The interval 90–131 is disordered; sequence RLARHGLYEKKKTSRKQRKERKNRMKKVRGTAKANVGAGKKK. Over residues 101–119 the composition is skewed to basic residues; it reads KTSRKQRKERKNRMKKVRG.

The protein belongs to the eukaryotic ribosomal protein eS24 family. As to quaternary structure, component of the small ribosomal subunit. Part of the small subunit (SSU) processome, composed of more than 70 proteins and the RNA chaperone small nucleolar RNA (snoRNA) U3.

It localises to the cytoplasm. Its subcellular location is the nucleus. The protein localises to the nucleolus. Functionally, component of the small ribosomal subunit. The ribosome is a large ribonucleoprotein complex responsible for the synthesis of proteins in the cell. Required for processing of pre-rRNA and maturation of 40S ribosomal subunits. Part of the small subunit (SSU) processome, first precursor of the small eukaryotic ribosomal subunit. During the assembly of the SSU processome in the nucleolus, many ribosome biogenesis factors, an RNA chaperone and ribosomal proteins associate with the nascent pre-rRNA and work in concert to generate RNA folding, modifications, rearrangements and cleavage as well as targeted degradation of pre-ribosomal RNA by the RNA exosome. The sequence is that of Small ribosomal subunit protein eS24 (RPS24) from Macaca fascicularis (Crab-eating macaque).